Reading from the N-terminus, the 72-residue chain is UPF0270 protein ESA_04379 (72 aa).

This sequence belongs to the UPF0270 family.

This Cronobacter sakazakii (strain ATCC BAA-894) (Enterobacter sakazakii) protein is UPF0270 protein ESA_04379.